We begin with the raw amino-acid sequence, 279 residues long: Putative ABC transporter ATP-binding protein GSU3001 (279 aa).

The region spanning 1–237 is the ABC transporter domain; that stretch reads MRFSVDLKAY…PAEMESVKLR (237 aa). An ATP-binding site is contributed by 36-43; sequence GSNGSGKT.

Belongs to the ABC transporter superfamily.

Its subcellular location is the cell inner membrane. In terms of biological role, probably part of an ABC transporter complex. Responsible for energy coupling to the transport system. This Geobacter sulfurreducens (strain ATCC 51573 / DSM 12127 / PCA) protein is Putative ABC transporter ATP-binding protein GSU3001.